Here is an 899-residue protein sequence, read N- to C-terminus: Conserved oligomeric Golgi complex subunit 3 (899 aa).

This sequence belongs to the COG3 family. As to quaternary structure, component of the conserved oligomeric Golgi complex which is composed of eight different subunits and is required for normal Golgi morphology and localization.

It is found in the golgi apparatus membrane. Involved in ER-Golgi transport. The sequence is that of Conserved oligomeric Golgi complex subunit 3 from Aedes aegypti (Yellowfever mosquito).